The chain runs to 1271 residues: Chitin synthase 4 (1271 aa).

Disordered stretches follow at residues 1-45 (MPPT…SFDH) and 58-117 (PNHP…ERPS). Polar residues predominate over residues 21 to 30 (APDTQESSPA). The next 2 membrane-spanning stretches (helical) occupy residues 165–185 (WWIR…LVHL) and 201–221 (LAIF…IIFF). N-linked (GlcNAc...) asparagine glycosylation occurs at Asn-407. A helical membrane pass occupies residues 473 to 493 (LLLAFSIILIATIASKFLAAL). N-linked (GlcNAc...) asparagine glycosylation is found at Asn-713 and Asn-836. A run of 3 helical transmembrane segments spans residues 867–887 (LLGT…VIVV), 894–914 (IPVI…LIFI), and 919–939 (FMLI…SVFL). Residues 999-1081 (HSESPAPSEK…DKSFIRGSKP (83 aa)) are disordered. A compositionally biased stretch (polar residues) spans 1027 to 1037 (RSPSFHSSASE). N-linked (GlcNAc...) asparagine glycosylation is found at Asn-1055 and Asn-1161. Positions 1213 to 1269 (EVQDEEVLDKLKTWLSKQDLMSVTKRQTREAIYTLFPNAGLQNRAGWLNEQIDKILS) constitute a DEK-C domain.

It belongs to the chitin synthase family.

The protein resides in the cell membrane. It catalyses the reaction [(1-&gt;4)-N-acetyl-beta-D-glucosaminyl](n) + UDP-N-acetyl-alpha-D-glucosamine = [(1-&gt;4)-N-acetyl-beta-D-glucosaminyl](n+1) + UDP + H(+). Functionally, polymerizes chitin, a structural polymer of the cell wall and septum, by transferring the sugar moiety of UDP-GlcNAc to the non-reducing end of the growing chitin polymer. Produces a large proportion of the chitin that is not deacetylated to chitosan. This Cryptococcus neoformans var. grubii serotype A (strain H99 / ATCC 208821 / CBS 10515 / FGSC 9487) (Filobasidiella neoformans var. grubii) protein is Chitin synthase 4.